Consider the following 510-residue polypeptide: MGNGGRCMVEVVILLVLMAMSQGCDAQNTTGGLTRKSFPNGFVFGTASSAYQYEGAVKEDGRGPTIWDKFAHTFGKIIDFSNADVAVDQYHRFEEDIQLMADMGMDAYRFSISWSRIFPNGTGEVNQAGIDHYNKLINALLAKGIEPYVTLYHWDLPQALEDKYTGWLDRQIINDYAVYAETCFQAFGDRVKHWITFNEPHTVAVQAYDSGMHAPGRCSVLLHLYCKKGNSGTEPYIVAHNMILSHATVSDIYRKKYKASQNGELGISFDVIWYEPMSNSTADIEAAKRAQEFQLGWFADPFFFGDYPATMRSRVGSRLPKFTEKEAALVNGSLDFMGINHYTTFYTKDDQSTVIEKLLNNTLADTATISVPFRNGQPIGDRANSIWLYIVPRSMRILMNYVKDRYNKPTVYITENGMDDGNSPFISLKNALKDDKRTKYHNDYLTNLADSIREDGCDVRGYFAWSLLDNWEWAAGYTSRFGLYYVDYKNRKRYPKNSVQWFKNLLASSS.

The first 26 residues, 1–26 (MGNGGRCMVEVVILLVLMAMSQGCDA), serve as a signal peptide directing secretion. Asn28 carries N-linked (GlcNAc...) asparagine glycosylation. Gln52 is an a beta-D-glucoside binding site. A glycan (N-linked (GlcNAc...) asparagine) is linked at Asn120. Residues His153 and 198 to 199 (NE) each bind a beta-D-glucoside. Glu199 (proton donor) is an active-site residue. Cys218 and Cys226 are disulfide-bonded. 2 N-linked (GlcNAc...) asparagine glycosylation sites follow: Asn279 and Asn331. Tyr342 is an a beta-D-glucoside binding site. N-linked (GlcNAc...) asparagine glycosylation occurs at Asn360. Residues Glu415, Trp465, 472–473 (EW), and Phe481 contribute to the a beta-D-glucoside site. The active-site Nucleophile is Glu415.

It belongs to the glycosyl hydrolase 1 family.

The enzyme catalyses Hydrolysis of terminal, non-reducing beta-D-glucosyl residues with release of beta-D-glucose.. The polypeptide is Beta-glucosidase 34 (BGLU34) (Oryza sativa subsp. japonica (Rice)).